A 209-amino-acid polypeptide reads, in one-letter code: Protein lin-28 homolog A (209 aa).

The interval 1–31 is disordered; it reads MGSVSNQQFAGGCAKAAEEAPEEAPEDAARA. Residue glycine 2 is modified to N-acetylglycine. At serine 3 the chain carries Phosphoserine. The CSD domain occupies 39 to 112; it reads HGAGICKWFN…GLESIRVTGP (74 aa). A flexible linker region spans residues 113 to 136; it reads GGVFCIGSERRPKGKSMQKRRSKG. Serine 120 is subject to Phosphoserine. CCHC-type zinc fingers lie at residues 137–154 and 159–176; these read DRCY…ECKL and KKCH…SCPL. The tract at residues 178-209 is disordered; sequence AQQGPSAQGKPTYFREEEEEIHSPTLLPEAQN. A Phosphoserine modification is found at serine 200.

It belongs to the lin-28 family. In terms of assembly, monomer. During skeletal muscle differentiation, associated with translation initiation complexes in the polysomal compartment. Directly interacts with EIF3S2. Interacts with NCL in an RNA-dependent manner. Interacts (via C-terminus) with DHX9 (via N- and C-terminus); this interaction occurs in a RNA-independent manner. Interacts with TUT4 in the presence of pre-let-7 RNA. In terms of tissue distribution, expressed in embryonic stem cells, placenta and testis. Tends to be up-regulated in HER2-overexpressing breast tumors.

The protein resides in the cytoplasm. It is found in the rough endoplasmic reticulum. The protein localises to the P-body. It localises to the stress granule. Its subcellular location is the nucleus. The protein resides in the nucleolus. Functionally, RNA-binding protein that inhibits processing of pre-let-7 miRNAs and regulates translation of mRNAs that control developmental timing, pluripotency and metabolism. Seems to recognize a common structural G-quartet (G4) feature in its miRNA and mRNA targets. 'Translational enhancer' that drives specific mRNAs to polysomes and increases the efficiency of protein synthesis. Its association with the translational machinery and target mRNAs results in an increased number of initiation events per molecule of mRNA and, indirectly, in mRNA stabilization. Binds IGF2 mRNA, MYOD1 mRNA, ARBP/36B4 ribosomal protein mRNA and its own mRNA. Essential for skeletal muscle differentiation program through the translational up-regulation of IGF2 expression. Suppressor of microRNA (miRNA) biogenesis, including that of let-7, miR107, miR-143 and miR-200c. Specifically binds the miRNA precursors (pre-miRNAs), recognizing an 5'-GGAG-3' motif found in pre-miRNA terminal loop, and recruits TUT4 and TUT7 uridylyltransferases. This results in the terminal uridylation of target pre-miRNAs. Uridylated pre-miRNAs fail to be processed by Dicer and undergo degradation. The repression of let-7 expression is required for normal development and contributes to maintain the pluripotent state by preventing let-7-mediated differentiation of embryonic stem cells. Localized to the periendoplasmic reticulum area, binds to a large number of spliced mRNAs and inhibits the translation of mRNAs destined for the ER, reducing the synthesis of transmembrane proteins, ER or Golgi lumen proteins, and secretory proteins. Binds to and enhances the translation of mRNAs for several metabolic enzymes, such as PFKP, PDHA1 or SDHA, increasing glycolysis and oxidative phosphorylation. Which, with the let-7 repression may enhance tissue repair in adult tissue. The chain is Protein lin-28 homolog A (LIN28A) from Homo sapiens (Human).